We begin with the raw amino-acid sequence, 209 residues long: D-aminoacyl-tRNA deacylase 1 (209 aa).

Residues Val4, Gln6, and Cys28 each coordinate Mg(2+). The Gly-cisPro motif, important for rejection of L-amino acids signature appears at 139-140 (GP). The interval 142-209 (TIELESPAPG…EGDVSSEREP (68 aa)) is disordered. 2 stretches are compositionally biased toward basic and acidic residues: residues 159–170 (QLSKLEKQQQRK) and 181–194 (SSKE…EDRS). Residues Ser197, Ser204, and Ser205 each carry the phosphoserine modification.

This sequence belongs to the DTD family. Homodimer. Interacts with CDC45 and TOPBP1. Post-translationally, preferentially phosphorylated in cells arrested early in S phase. Phosphorylation in the C-terminus weakens the interaction with CDC45.

The protein resides in the nucleus. The protein localises to the cytoplasm. The catalysed reaction is glycyl-tRNA(Ala) + H2O = tRNA(Ala) + glycine + H(+). It catalyses the reaction a D-aminoacyl-tRNA + H2O = a tRNA + a D-alpha-amino acid + H(+). An aminoacyl-tRNA editing enzyme that deacylates mischarged D-aminoacyl-tRNAs. Also deacylates mischarged glycyl-tRNA(Ala), protecting cells against glycine mischarging by AlaRS. Acts via tRNA-based rather than protein-based catalysis; rejects L-amino acids rather than detecting D-amino acids in the active site. By recycling D-aminoacyl-tRNA to D-amino acids and free tRNA molecules, this enzyme counteracts the toxicity associated with the formation of D-aminoacyl-tRNA entities in vivo and helps enforce protein L-homochirality. In terms of biological role, ATPase involved in DNA replication, may facilitate loading of CDC45 onto pre-replication complexes. This Bos taurus (Bovine) protein is D-aminoacyl-tRNA deacylase 1 (DTD1).